We begin with the raw amino-acid sequence, 629 residues long: MDHPERFDVIVVGGGHAGTEAAMAAARIGARTLLLTHSIETVGQMSCNPAIGGIGKGHLVREIDALGGIMARAADRGGIQFRTLNSRKGPAVRATRAQADRQLYRQAIRRAVENQPRLALFQQSVDDLIVEGGRVTGVVTGMGLRFRAPAVVLTVGTFLGGRIHIGESNYGGGRAGDPAANALAARLRELPFQVDRLKTGTPPRLDGRTIDWARLTEQPGDDPAPVFSFLGRPDEHPAQVPCHIAHTRPETHDIIRGALDRSPMYSGTIEGVGPRYCPSIEDKVVRFADKGSHQIFLEPEGLDTHEVYPNGISTSLPFDVQYELVRSIPGLEQARIVRPGYAIEYDFFDPRGLHPTLETRHLEGLWFAGQINGTTGYEEAAAQGLLAGLNAALRVQGREPWYPRRDQAYLGVLVDDLITRGTREPYRMFTSRAEYRLMLREDNADLRLTPIGRDLGLVDDERWRRFNAKREALEREQARLAATLIRPGDLPDALARQVLGGPLRKEQRLEELLRRPDVGYADLMRLPGAGDPVPDAEVVEQLEIQARYAGYLERQHDEVARARRHEQLPLPEGLAYDRVAGLSSEVREKLAAHRPATVGQAARIPGVTPAAVSLLLVHLRRQGLLRESA.

Residue 13 to 18 coordinates FAD; it reads GGGHAG. NAD(+) is bound at residue 273-287; it reads GPRYCPSIEDKVVRF.

The protein belongs to the MnmG family. Homodimer. Heterotetramer of two MnmE and two MnmG subunits. FAD serves as cofactor.

The protein localises to the cytoplasm. NAD-binding protein involved in the addition of a carboxymethylaminomethyl (cmnm) group at the wobble position (U34) of certain tRNAs, forming tRNA-cmnm(5)s(2)U34. The sequence is that of tRNA uridine 5-carboxymethylaminomethyl modification enzyme MnmG from Alkalilimnicola ehrlichii (strain ATCC BAA-1101 / DSM 17681 / MLHE-1).